The primary structure comprises 1160 residues: Envelope glycoprotein (1160 aa).

The N-terminal stretch at 1 to 22 (MDTPGSLQVIAIISLLLVGGAS) is a signal peptide. Topologically, residues 23–853 (QPATFLEKAL…DGSVWSQLQL (831 aa)) are extracellular. N50, N95, N109, N134, N148, N232, N254, N304, N323, N621, N664, N722, and N771 each carry an N-linked (GlcNAc...) asparagine; by host glycan. The tract at residues 230–251 (VPNSTLSPTGTTDFTKFTPNPI) is disordered. Residues 854–874 (IIVVITCTIPLLWVLNTCLFF) traverse the membrane as a helical segment. Topologically, residues 875 to 1048 (KLRRAIRRER…VNQHAEYMGK (174 aa)) are cytoplasmic. A helical transmembrane segment spans residues 1049–1069 (PVIVTLAGLVITPVGLAWIPL). At 1070–1127 (PQQEPLEKLFMVPNSMPHVTVAMADYHETKEMGKIVKDINNEELLLVKPQLFKWGPEG) the chain is on the extracellular side. Residues 1128-1148 (FFVACPLVIRGVVTGHSLLHI) form a helical membrane-spanning segment. Topologically, residues 1149-1160 (ACPATAVQAEGT) are cytoplasmic.

The mature envelope protein (Env) consists of a trimer of SU-TM heterodimers attached by non-covalent interactions or by a labile interchain disulfide bond. Specific enzymatic cleavages in vivo yield mature proteins. Envelope glycoproteins are synthesized as an inactive precursor that is N-glycosylated and processed likely by host cell furin or by a furin-like protease in the Golgi to yield the mature SU and TM proteins. The cleavage site between SU and TM requires the minimal sequence [KR]-X-[KR]-R.

Its subcellular location is the virion membrane. It localises to the host cell membrane. Its function is as follows. (SU) attaches the virus to the host cell by binding to its receptor. This interaction triggers the refolding of the transmembrane protein (TM) and is thought to activate its fusogenic potential by unmasking its fusion peptide. Fusion occurs at the host cell plasma membrane. In terms of biological role, (TM) acts as a class I viral fusion protein. Under the current model, the protein has at least 3 conformational states: pre-fusion native state, pre-hairpin intermediate state, and post-fusion hairpin state. During viral and target cell membrane fusion, the coiled coil regions (heptad repeats) assume a trimer-of-hairpins structure, positioning the fusion peptide in close proximity to the C-terminal region of the ectodomain. The formation of this structure appears to drive apposition and subsequent fusion of viral and target cell membranes. Membranes fusion leads to delivery of the nucleocapsid into the cytoplasm. This Walleye dermal sarcoma virus (WDSV) protein is Envelope glycoprotein (env).